Here is a 290-residue protein sequence, read N- to C-terminus: Short neuropeptide F (290 aa).

The N-terminal stretch at 1-32 is a signal peptide; the sequence is MFRFNPQLSHGCALALICCLLNLLMMHQPTNA. Positions 33 to 87 are excised as a propeptide; sequence ELSPVVQGEFFLPILPDDHPPNTDTSFGGPISNLYDNLLQREYAGPVVFPNHQVE. 2 positions are modified to phenylalanine amide: F100 and F134. The propeptide occupies 138-290; the sequence is DPTLPQMRRT…IETSSIAPKN (153 aa). Positions 238-290 are disordered; the sequence is VAGYANDGDDTEAQLDEDTSEFQREARKPMRLRWGRSTGKAPQIETSSIAPKN. A compositionally biased stretch (acidic residues) spans 244-257; it reads DGDDTEAQLDEDTS. Over residues 281–290 the composition is skewed to polar residues; that stretch reads IETSSIAPKN.

It belongs to the NPY family.

The protein localises to the secreted. Plays a role in controlling food intake and regulating body size. This chain is Short neuropeptide F, found in Drosophila pseudoobscura pseudoobscura (Fruit fly).